A 434-amino-acid polypeptide reads, in one-letter code: Tryptophan synthase beta chain (434 aa).

K92 is modified (N6-(pyridoxal phosphate)lysine). Residues 411–434 (VKGGVATSPESFDASGAKGAGSQS) are disordered.

The protein belongs to the TrpB family. Tetramer of two alpha and two beta chains. Pyridoxal 5'-phosphate is required as a cofactor.

It carries out the reaction (1S,2R)-1-C-(indol-3-yl)glycerol 3-phosphate + L-serine = D-glyceraldehyde 3-phosphate + L-tryptophan + H2O. The protein operates within amino-acid biosynthesis; L-tryptophan biosynthesis; L-tryptophan from chorismate: step 5/5. The beta subunit is responsible for the synthesis of L-tryptophan from indole and L-serine. This chain is Tryptophan synthase beta chain, found in Polaromonas naphthalenivorans (strain CJ2).